Consider the following 288-residue polypeptide: DNA repair protein RecO (288 aa).

It belongs to the RecO family.

In terms of biological role, involved in DNA repair and RecF pathway recombination. This is DNA repair protein RecO from Trichodesmium erythraeum (strain IMS101).